Consider the following 571-residue polypeptide: Septation ring formation regulator EzrA (571 aa).

Topologically, residues 1 to 3 are extracellular; the sequence is MYY. Residues 4 to 22 form a helical membrane-spanning segment; it reads MLIGFIIVVIAVIGAGYIL. The Cytoplasmic portion of the chain corresponds to 23–571; the sequence is KRKHYQRINE…ASKVSVDDIE (549 aa). Coiled-coil stretches lie at residues 102-147, 248-298, 326-374, 400-437, and 478-529; these read ATNA…TKEK, LAQM…DTLE, DALA…ASGE, KFAEELRSLRKDELEARDDAERMRRAIITLDRKMERER, and RIAE…ENHF.

Belongs to the EzrA family.

It localises to the cell membrane. Its function is as follows. Negative regulator of FtsZ ring formation; modulates the frequency and position of FtsZ ring formation. Inhibits FtsZ ring formation at polar sites. Interacts either with FtsZ or with one of its binding partners to promote depolymerization. The polypeptide is Septation ring formation regulator EzrA (Listeria monocytogenes serotype 4a (strain HCC23)).